A 469-amino-acid chain; its full sequence is Acetyl-CoA decarbonylase/synthase complex subunit beta 1 (469 aa).

4 residues coordinate [Ni-Fe-S] cluster: Cys189, Cys192, Cys278, and Cys280.

It belongs to the CdhC family. In terms of assembly, monomer. The ACDS complex is made up of alpha, epsilon, beta, gamma and delta chains with a probable stoichiometry of (alpha(2)epsilon(2))(4)-beta(8)-(gamma(1)delta(1))(8) (Potential). The cofactor is [Ni-Fe-S] cluster.

The catalysed reaction is Co(I)-[corrinoid Fe-S protein] + acetyl-CoA + H(+) = methyl-Co(III)-[corrinoid Fe-S protein] + CO + CoA. It functions in the pathway one-carbon metabolism; methanogenesis from acetate. Part of a complex that catalyzes the reversible cleavage of acetyl-CoA, allowing growth on acetate as sole source of carbon and energy. The alpha-epsilon complex generates CO from CO(2), while the beta subunit (this protein) combines the CO with CoA and a methyl group to form acetyl-CoA. The methyl group, which is incorporated into acetyl-CoA, is transferred to the beta subunit by a corrinoid iron-sulfur protein (the gamma-delta complex). This Methanosarcina acetivorans (strain ATCC 35395 / DSM 2834 / JCM 12185 / C2A) protein is Acetyl-CoA decarbonylase/synthase complex subunit beta 1 (cdhC1).